The following is a 95-amino-acid chain: uncharacterized protein (95 aa).

Residues 45 to 65 form a helical membrane-spanning segment; that stretch reads WLSGLAFVLQAALVMPVVLAF.

The protein resides in the membrane. This is an uncharacterized protein from Mycobacterium leprae (strain TN).